The chain runs to 175 residues: Large ribosomal subunit protein uL10 (175 aa).

Belongs to the universal ribosomal protein uL10 family. As to quaternary structure, part of the ribosomal stalk of the 50S ribosomal subunit. The N-terminus interacts with L11 and the large rRNA to form the base of the stalk. The C-terminus forms an elongated spine to which L12 dimers bind in a sequential fashion forming a multimeric L10(L12)X complex.

Its function is as follows. Forms part of the ribosomal stalk, playing a central role in the interaction of the ribosome with GTP-bound translation factors. The sequence is that of Large ribosomal subunit protein uL10 from Prochlorococcus marinus (strain MIT 9215).